Reading from the N-terminus, the 166-residue chain is Ribosome maturation factor RimM (166 aa).

The region spanning 94 to 166 is the PRC barrel domain; it reads EGEYYHADLI…IVIEAAYADQ (73 aa).

This sequence belongs to the RimM family. In terms of assembly, binds ribosomal protein uS19.

The protein resides in the cytoplasm. In terms of biological role, an accessory protein needed during the final step in the assembly of 30S ribosomal subunit, possibly for assembly of the head region. Essential for efficient processing of 16S rRNA. May be needed both before and after RbfA during the maturation of 16S rRNA. It has affinity for free ribosomal 30S subunits but not for 70S ribosomes. This chain is Ribosome maturation factor RimM, found in Novosphingobium aromaticivorans (strain ATCC 700278 / DSM 12444 / CCUG 56034 / CIP 105152 / NBRC 16084 / F199).